The following is a 1872-amino-acid chain: Chitin synthase 6 (1872 aa).

The tract at residues 1–23 (MAQHLPPVGGNGGAHTQPSLPAL) is disordered. In terms of domain architecture, Myosin motor spans 1–779 (MAQHLPPVGG…CWMEIAQLSD (779 aa)). 104–111 (GESGSGKT) provides a ligand contact to ATP. N-linked (GlcNAc...) asparagine glycans are attached at residues Asn123, Asn291, Asn428, and Asn559. The tract at residues 587-652 (VMQASVSSKP…VNKPSEEGAS (66 aa)) is disordered. The tract at residues 659-683 (LDNVTKSFHAQNTNAYFVFCLKPND) is actin-binding. Asn661 is a glycosylation site (N-linked (GlcNAc...) asparagine). Helical transmembrane passes span 881 to 901 (WVFI…QHLG) and 920 to 940 (FIIW…PMLV). Residues 944-1003 (QYVFTGEELSAYNGKDGKASYAAIRGQVFDIGSFIPRHPLPYLPSKLFTQYAGTDITGLF) form the Cytochrome b5 heme-binding domain. N-linked (GlcNAc...) asparagine glycans are attached at residues Asn1030, Asn1055, and Asn1120. Residues 1193–1213 (FILAVTIILCSIIAFKFLAAL) traverse the membrane as a helical segment. 2 N-linked (GlcNAc...) asparagine glycosylation sites follow: Asn1450 and Asn1556. The next 3 helical transmembrane spans lie at 1581-1601 (FIVF…AYIV), 1614-1634 (VPVL…IIFI), and 1641-1661 (MIAW…GLPL). Residues 1814 to 1869 (LPSDDALLAEIREILRTADLMTVTKKGVKQELERRFGVNLDSRRAYINSATEALLS) enclose the DEK-C domain.

The protein belongs to the chitin synthase family. Class V subfamily.

It localises to the cell membrane. The catalysed reaction is [(1-&gt;4)-N-acetyl-beta-D-glucosaminyl](n) + UDP-N-acetyl-alpha-D-glucosamine = [(1-&gt;4)-N-acetyl-beta-D-glucosaminyl](n+1) + UDP + H(+). Polymerizes chitin, a structural polymer of the cell wall and septum, by transferring the sugar moiety of UDP-GlcNAc to the non-reducing end of the growing chitin polymer. Required for appressorium penetration and invasive growth. The polypeptide is Chitin synthase 6 (Pyricularia oryzae (strain 70-15 / ATCC MYA-4617 / FGSC 8958) (Rice blast fungus)).